Reading from the N-terminus, the 298-residue chain is ATP-dependent Clp protease proteolytic subunit 5, chloroplastic (298 aa).

A chloroplast-targeting transit peptide spans methionine 1–glutamine 100. Position 101 is an N-acetylglycine (glycine 101). Serine 193 (nucleophile) is an active-site residue. Histidine 218 is an active-site residue.

The protein belongs to the peptidase S14 family. As to quaternary structure, component of the chloroplastic Clp protease core complex which consist of at least 16 proteins: CLPP4 (3 copies), CLPP5 (3 copies), CLPR4 (2 copies), ClpP1 (1 copy), CLPP6 (1 copy), CLPR2 (1 copy), CLPT1 (1 copy), CLPT2 (1 copy) and 3 copies of CLPP3 and/or CLPR1 and/or CLPR3. The core complex is organized in two heptameric rings, one containing CLPP3,4,5,6 in a 1:2:3:1 ratio and the other CLPP1 and CLPR1,2,3,4 in a 3:1:1:1:1 ratio. Interacts with CHIP. Post-translationally, ubiquitinated in vitro by CHIP. As to expression, mostly expressed in leaves. Also detected in stems, and to a lower extent, in roots (at protein level).

The protein resides in the plastid. The protein localises to the chloroplast stroma. The catalysed reaction is Hydrolysis of proteins to small peptides in the presence of ATP and magnesium. alpha-casein is the usual test substrate. In the absence of ATP, only oligopeptides shorter than five residues are hydrolyzed (such as succinyl-Leu-Tyr-|-NHMec, and Leu-Tyr-Leu-|-Tyr-Trp, in which cleavage of the -Tyr-|-Leu- and -Tyr-|-Trp bonds also occurs).. Cleaves peptides in various proteins in a process that requires ATP hydrolysis. Has a chymotrypsin-like activity. Plays a major role in the degradation of misfolded proteins. The polypeptide is ATP-dependent Clp protease proteolytic subunit 5, chloroplastic (Arabidopsis thaliana (Mouse-ear cress)).